We begin with the raw amino-acid sequence, 226 residues long: Late protein I226R (226 aa).

The signal sequence occupies residues 1–16; it reads MKMETFLVCLFHNADG. Residues N142 and N164 are each glycosylated (N-linked (GlcNAc...) asparagine; by host).

It belongs to the asfivirus I226R family.

Plays a role in the inhibition of host NF-kappa-B and IRF3 signaling pathways. Mechanistically, promotes the degradation of host IKBKG through enhancing its ubiquitination leading to inhibition of both pathways. The polypeptide is Late protein I226R (Ornithodoros (relapsing fever ticks)).